We begin with the raw amino-acid sequence, 188 residues long: Large ribosomal subunit protein eL18 (188 aa).

A Glycyl lysine isopeptide (Lys-Gly) (interchain with G-Cter in SUMO2) cross-link involves residue K119. Phosphoserine is present on S130. Residues 151-188 (HFGKAPGTPHSHTKPYVRSKGRKFERARGRRASRGYKN) are disordered. T158 carries the phosphothreonine modification. 2 stretches are compositionally biased toward basic residues: residues 161–171 (SHTKPYVRSKG) and 178–188 (RGRRASRGYKN). Residue K164 forms a Glycyl lysine isopeptide (Lys-Gly) (interchain with G-Cter in SUMO2) linkage.

This sequence belongs to the eukaryotic ribosomal protein eL18 family. As to quaternary structure, component of the large ribosomal subunit.

Its subcellular location is the cytoplasm. The protein localises to the cytosol. It is found in the rough endoplasmic reticulum. Component of the large ribosomal subunit. The ribosome is a large ribonucleoprotein complex responsible for the synthesis of proteins in the cell. This Homo sapiens (Human) protein is Large ribosomal subunit protein eL18 (RPL18).